The primary structure comprises 380 residues: 3-isopropylmalate dehydratase large subunit 2 (380 aa).

Cys-262, Cys-320, and Cys-323 together coordinate [4Fe-4S] cluster.

It belongs to the aconitase/IPM isomerase family. LeuC type 2 subfamily. In terms of assembly, heterodimer of LeuC and LeuD. Requires [4Fe-4S] cluster as cofactor.

The catalysed reaction is (2R,3S)-3-isopropylmalate = (2S)-2-isopropylmalate. It participates in amino-acid biosynthesis; L-leucine biosynthesis; L-leucine from 3-methyl-2-oxobutanoate: step 2/4. Its function is as follows. Catalyzes the isomerization between 2-isopropylmalate and 3-isopropylmalate, via the formation of 2-isopropylmaleate. In Pyrococcus furiosus (strain ATCC 43587 / DSM 3638 / JCM 8422 / Vc1), this protein is 3-isopropylmalate dehydratase large subunit 2.